The primary structure comprises 158 residues: SUMO-conjugating enzyme UBC9 (158 aa).

Positions 4–157 (IALSRLAQER…VRAQAKKFSP (154 aa)) constitute a UBC core domain. The interaction with sumo1 stretch occupies residues 13–18 (RKAWRK). The active-site Glycyl thioester intermediate is the Cys93.

The protein belongs to the ubiquitin-conjugating enzyme family. In terms of assembly, forms a tight complex with RANGAP1 and RANBP2.

The protein localises to the nucleus. The protein operates within protein modification; protein sumoylation. Accepts the ubiquitin-like proteins SUMO1, SUMO2 and SUMO3 from the UBLE1A-UBLE1B E1 complex and catalyzes their covalent attachment to other proteins with the help of an E3 ligase such as RANBP2 or CBX4. Essential for nuclear architecture and chromosome segregation. The chain is SUMO-conjugating enzyme UBC9 (ube2i) from Pagrus major (Red sea bream).